We begin with the raw amino-acid sequence, 219 residues long: uncharacterized protein (219 aa).

The first 22 residues, 1-22, serve as a signal peptide directing secretion; that stretch reads MKKRRKICYCNTALLLMILLAG. The N-palmitoyl cysteine moiety is linked to residue Cys23. Cys23 carries S-diacylglycerol cysteine lipidation. Positions 26–89 are disordered; that stretch reads SKDGEAQQPS…SAEEKSKEDN (64 aa). The segment covering 32 to 42 has biased composition (polar residues); the sequence is QQPSNQASAVQ. Positions 43–61 are enriched in basic and acidic residues; it reads TDEKHTEPEESTKIRKDEA.

It localises to the cell membrane. This is an uncharacterized protein from Bacillus subtilis (strain 168).